A 382-amino-acid polypeptide reads, in one-letter code: Lipid-A-disaccharide synthase (382 aa).

It belongs to the LpxB family.

It catalyses the reaction 2-N,3-O-bis[(3R)-3-hydroxytetradecanoyl]-alpha-D-glucosaminyl 1-phosphate + UDP-2-N,3-O-bis[(3R)-3-hydroxytetradecanoyl]-alpha-D-glucosamine = lipid A disaccharide (E. coli) + UDP + H(+). The enzyme catalyses a lipid X + a UDP-2-N,3-O-bis[(3R)-3-hydroxyacyl]-alpha-D-glucosamine = a lipid A disaccharide + UDP + H(+). It functions in the pathway glycolipid biosynthesis; lipid IV(A) biosynthesis; lipid IV(A) from (3R)-3-hydroxytetradecanoyl-[acyl-carrier-protein] and UDP-N-acetyl-alpha-D-glucosamine: step 5/6. Condensation of UDP-2,3-diacylglucosamine and 2,3-diacylglucosamine-1-phosphate to form lipid A disaccharide, a precursor of lipid A, a phosphorylated glycolipid that anchors the lipopolysaccharide to the outer membrane of the cell. This chain is Lipid-A-disaccharide synthase, found in Citrobacter koseri (strain ATCC BAA-895 / CDC 4225-83 / SGSC4696).